Reading from the N-terminus, the 490-residue chain is Cobyric acid synthase (490 aa).

In terms of domain architecture, GATase cobBQ-type spans 253-440 (KLRVAAPAAP…LHGVFDEPAA (188 aa)). C334 serves as the catalytic Nucleophile. Residue H432 is part of the active site.

This sequence belongs to the CobB/CobQ family. CobQ subfamily.

Its pathway is cofactor biosynthesis; adenosylcobalamin biosynthesis. Functionally, catalyzes amidations at positions B, D, E, and G on adenosylcobyrinic A,C-diamide. NH(2) groups are provided by glutamine, and one molecule of ATP is hydrogenolyzed for each amidation. This Chromobacterium violaceum (strain ATCC 12472 / DSM 30191 / JCM 1249 / CCUG 213 / NBRC 12614 / NCIMB 9131 / NCTC 9757 / MK) protein is Cobyric acid synthase.